Here is a 105-residue protein sequence, read N- to C-terminus: Small ribosomal subunit protein uS14m (105 aa).

It belongs to the universal ribosomal protein uS14 family. In terms of assembly, component of the mitochondrial small ribosomal subunit (mt-SSU). Mature yeast 74S mitochondrial ribosomes consist of a small (37S) and a large (54S) subunit. The 37S small subunit contains a 15S ribosomal RNA (15S mt-rRNA) and at least 32 different proteins. The 54S large subunit contains a 21S rRNA (21S mt-rRNA) and at least 45 different proteins.

It localises to the mitochondrion. Functionally, component of the mitochondrial ribosome (mitoribosome), a dedicated translation machinery responsible for the synthesis of mitochondrial genome-encoded proteins, including at least some of the essential transmembrane subunits of the mitochondrial respiratory chain. The mitoribosomes are attached to the mitochondrial inner membrane and translation products are cotranslationally integrated into the membrane. This Schizosaccharomyces pombe (strain 972 / ATCC 24843) (Fission yeast) protein is Small ribosomal subunit protein uS14m (mrp2).